A 241-amino-acid polypeptide reads, in one-letter code: CD99 antigen-like protein 2 (241 aa).

The N-terminal stretch at 1–23 (MAKWGSPFVFALACLALSWRVYG) is a signal peptide. Over 24-173 (DDFDLYDALG…TGFGSQAETG (150 aa)) the chain is Extracellular. Positions 30–168 (DALGDPTEKP…NDGSDTGFGS (139 aa)) are disordered. Residues 143–154 (GGGGGGGGGRAT) show a composition bias toward gly residues. Residues 174–196 (TIAGIASALAMALIGAVSSYISY) traverse the membrane as a helical segment. Residues 197–241 (QQKKFCFSIQEGLNAEYVKGEHMEAVVSEEPQVKYSVVESQSAIP) are Cytoplasmic-facing.

Belongs to the CD99 family.

It is found in the cell membrane. The protein resides in the cell junction. In terms of biological role, may function as a homophilic adhesion molecule. In Xenopus tropicalis (Western clawed frog), this protein is CD99 antigen-like protein 2 (cd99l2).